Here is a 643-residue protein sequence, read N- to C-terminus: Threonine--tRNA ligase (643 aa).

The 61-residue stretch at 1–61 (MPIITLPDGS…EQDATLEIIT (61 aa)) folds into the TGS domain. The interval 243-534 (DHRKIGKALD…ITEEYAGFFP (292 aa)) is catalytic. Zn(2+)-binding residues include Cys-334, His-385, and His-511.

The protein belongs to the class-II aminoacyl-tRNA synthetase family. Homodimer. It depends on Zn(2+) as a cofactor.

The protein resides in the cytoplasm. It carries out the reaction tRNA(Thr) + L-threonine + ATP = L-threonyl-tRNA(Thr) + AMP + diphosphate + H(+). Functionally, catalyzes the attachment of threonine to tRNA(Thr) in a two-step reaction: L-threonine is first activated by ATP to form Thr-AMP and then transferred to the acceptor end of tRNA(Thr). Also edits incorrectly charged L-seryl-tRNA(Thr). This chain is Threonine--tRNA ligase, found in Haemophilus influenzae (strain PittEE).